Consider the following 488-residue polypeptide: Ribulose bisphosphate carboxylase large chain (488 aa).

Positions 127 and 177 each coordinate substrate. The active-site Proton acceptor is the lysine 179. Lysine 181 contributes to the substrate binding site. Mg(2+)-binding residues include lysine 205, aspartate 207, and glutamate 208. Lysine 205 is modified (N6-carboxylysine). The Proton acceptor role is filled by histidine 297. 3 residues coordinate substrate: arginine 298, histidine 330, and serine 382.

This sequence belongs to the RuBisCO large chain family. Type I subfamily. In terms of assembly, heterohexadecamer of 8 large chains and 8 small chains. It depends on Mg(2+) as a cofactor.

It localises to the plastid. Its subcellular location is the chloroplast. It carries out the reaction 2 (2R)-3-phosphoglycerate + 2 H(+) = D-ribulose 1,5-bisphosphate + CO2 + H2O. It catalyses the reaction D-ribulose 1,5-bisphosphate + O2 = 2-phosphoglycolate + (2R)-3-phosphoglycerate + 2 H(+). Functionally, ruBisCO catalyzes two reactions: the carboxylation of D-ribulose 1,5-bisphosphate, the primary event in carbon dioxide fixation, as well as the oxidative fragmentation of the pentose substrate in the photorespiration process. Both reactions occur simultaneously and in competition at the same active site. The sequence is that of Ribulose bisphosphate carboxylase large chain from Pyropia yezoensis (Susabi-nori).